The following is a 373-amino-acid chain: Histidinol-phosphate aminotransferase (373 aa).

Lys230 is subject to N6-(pyridoxal phosphate)lysine.

It belongs to the class-II pyridoxal-phosphate-dependent aminotransferase family. Histidinol-phosphate aminotransferase subfamily. In terms of assembly, homodimer. It depends on pyridoxal 5'-phosphate as a cofactor.

It carries out the reaction L-histidinol phosphate + 2-oxoglutarate = 3-(imidazol-4-yl)-2-oxopropyl phosphate + L-glutamate. It participates in amino-acid biosynthesis; L-histidine biosynthesis; L-histidine from 5-phospho-alpha-D-ribose 1-diphosphate: step 7/9. The protein is Histidinol-phosphate aminotransferase of Synechococcus elongatus (strain ATCC 33912 / PCC 7942 / FACHB-805) (Anacystis nidulans R2).